Here is a 360-residue protein sequence, read N- to C-terminus: Phospho-N-acetylmuramoyl-pentapeptide-transferase (360 aa).

10 helical membrane-spanning segments follow: residues 26–46 (AIVSLLTALFISLWMGPRMIA), 72–92 (PTMGGIMILTAITVSVLLWAY), 94–114 (SNPYVWCVLTVLIGYGIIGFV), 132–152 (WKYFWMSVIALGVAFALYLAG), 168–188 (VMPQLGLFYILLAYFVIVGTG), 199–219 (GLAIMPTVFVAAGFALVAWAT), 236–256 (AGELVIVCTAIVGAGLGFLWF), 263–283 (VFMGDVGSLALGGALGIIAVL), 288–308 (FLLVIMGGVFVVETLSVILQV), and 338–358 (VIVRFWIISLMLVLIGLATLK).

Belongs to the glycosyltransferase 4 family. MraY subfamily. Requires Mg(2+) as cofactor.

It is found in the cell inner membrane. It catalyses the reaction UDP-N-acetyl-alpha-D-muramoyl-L-alanyl-gamma-D-glutamyl-meso-2,6-diaminopimeloyl-D-alanyl-D-alanine + di-trans,octa-cis-undecaprenyl phosphate = di-trans,octa-cis-undecaprenyl diphospho-N-acetyl-alpha-D-muramoyl-L-alanyl-D-glutamyl-meso-2,6-diaminopimeloyl-D-alanyl-D-alanine + UMP. The protein operates within cell wall biogenesis; peptidoglycan biosynthesis. Functionally, catalyzes the initial step of the lipid cycle reactions in the biosynthesis of the cell wall peptidoglycan: transfers peptidoglycan precursor phospho-MurNAc-pentapeptide from UDP-MurNAc-pentapeptide onto the lipid carrier undecaprenyl phosphate, yielding undecaprenyl-pyrophosphoryl-MurNAc-pentapeptide, known as lipid I. This chain is Phospho-N-acetylmuramoyl-pentapeptide-transferase, found in Klebsiella pneumoniae subsp. pneumoniae (strain ATCC 700721 / MGH 78578).